The chain runs to 104 residues: Large ribosomal subunit protein uL23 (104 aa).

It belongs to the universal ribosomal protein uL23 family. As to quaternary structure, part of the 50S ribosomal subunit. Contacts protein L29, and trigger factor when it is bound to the ribosome.

Functionally, one of the early assembly proteins it binds 23S rRNA. One of the proteins that surrounds the polypeptide exit tunnel on the outside of the ribosome. Forms the main docking site for trigger factor binding to the ribosome. This chain is Large ribosomal subunit protein uL23, found in Leptospira interrogans serogroup Icterohaemorrhagiae serovar copenhageni (strain Fiocruz L1-130).